The primary structure comprises 538 residues: Capsular polysaccharide biosynthesis protein RkpI (538 aa).

6 consecutive transmembrane segments (helical) span residues 16-36 (LHDY…AVIF), 70-90 (VIAL…YAAA), 114-134 (LVFS…IFYA), 139-159 (IVFW…YMYF), 170-190 (LFWV…LFYG), and 212-232 (NTVR…WLGV).

It is found in the cell membrane. The protein operates within capsule biogenesis; capsule polysaccharide biosynthesis. In terms of biological role, involved in antigen K (capsular polysaccharide) biosynthesis. This is Capsular polysaccharide biosynthesis protein RkpI (rkpI) from Rhizobium meliloti (strain 1021) (Ensifer meliloti).